The primary structure comprises 237 residues: Ribosomal RNA small subunit methyltransferase G (237 aa).

Residues G78, F83, 129 to 130, and R148 each bind S-adenosyl-L-methionine; that span reads AE.

Belongs to the methyltransferase superfamily. RNA methyltransferase RsmG family.

The protein resides in the cytoplasm. In terms of biological role, specifically methylates the N7 position of a guanine in 16S rRNA. In Streptococcus pyogenes serotype M4 (strain MGAS10750), this protein is Ribosomal RNA small subunit methyltransferase G.